The following is a 338-amino-acid chain: Lipoate-protein ligase A (338 aa).

Positions 29-216 (PATQRVLFLW…AFFAHYGERV (188 aa)) constitute a BPL/LPL catalytic domain. ATP is bound by residues Arg-71, 76–79 (GAVF), and Lys-134. Lys-134 serves as a coordination point for (R)-lipoate.

Belongs to the LplA family. As to quaternary structure, monomer.

It is found in the cytoplasm. The enzyme catalyses L-lysyl-[lipoyl-carrier protein] + (R)-lipoate + ATP = N(6)-[(R)-lipoyl]-L-lysyl-[lipoyl-carrier protein] + AMP + diphosphate + H(+). Its pathway is protein modification; protein lipoylation via exogenous pathway; protein N(6)-(lipoyl)lysine from lipoate: step 1/2. It participates in protein modification; protein lipoylation via exogenous pathway; protein N(6)-(lipoyl)lysine from lipoate: step 2/2. Its function is as follows. Catalyzes both the ATP-dependent activation of exogenously supplied lipoate to lipoyl-AMP and the transfer of the activated lipoyl onto the lipoyl domains of lipoate-dependent enzymes. The sequence is that of Lipoate-protein ligase A from Escherichia coli O9:H4 (strain HS).